The sequence spans 73 residues: Translational regulator CsrA (73 aa).

Positions 54-73 (ENRAASDSPWSPNSLPQLPV) are disordered. Positions 61–73 (SPWSPNSLPQLPV) are enriched in polar residues.

This sequence belongs to the CsrA/RsmA family. Homodimer; the beta-strands of each monomer intercalate to form a hydrophobic core, while the alpha-helices form wings that extend away from the core.

Its subcellular location is the cytoplasm. Its function is as follows. A translational regulator that binds mRNA to regulate translation initiation and/or mRNA stability. Usually binds in the 5'-UTR at or near the Shine-Dalgarno sequence preventing ribosome-binding, thus repressing translation. Its main target seems to be the major flagellin gene, while its function is anatagonized by FliW. The sequence is that of Translational regulator CsrA from Treponema pallidum (strain Nichols).